The sequence spans 43 residues: Protein PsbN (43 aa).

A helical transmembrane segment spans residues 5–25; it reads TLISVFVASLVIGITAYAIFV.

The protein belongs to the PsbN family.

It is found in the plastid. It localises to the chloroplast thylakoid membrane. May play a role in photosystem I and II biogenesis. The protein is Protein PsbN of Cyanidioschyzon merolae (strain NIES-3377 / 10D) (Unicellular red alga).